Reading from the N-terminus, the 433-residue chain is Keratin, type I cytoskeletal 47 kDa (433 aa).

Positions 1-73 (MSYSTRSISQ…AFNVSVTSNN (73 aa)) are head. Residues 74–109 (GKETMQNLNDRLANYLDRVRSLEQANHELELKIREY) form a coil 1A region. Residues 74–385 (GKETMQNLND…RLLEGEDTRF (312 aa)) form the IF rod domain. Positions 110 to 127 (LDKKAAVGSLDYSGYYNT) are linker 1. Residues 128 to 219 (INLLRSQIND…KNHEEELAVV (92 aa)) form a coil 1B region. Residues 220–242 (RSSARGNVDVQVDSAPPVDLAQI) form a linker 12 region. A coil 2 region spans residues 243-381 (MADVRSQYES…ATYRRLLEGE (139 aa)). The segment at 382–433 (DTRFSQTETQKAVTIVSKEQSSSSIKKVKTVIEEVVDGKVVSSRVEELTETS) is tail.

This sequence belongs to the intermediate filament family. Heterotetramer of two type I and two type II keratins.

In Xenopus laevis (African clawed frog), this protein is Keratin, type I cytoskeletal 47 kDa (xk70a).